A 255-amino-acid chain; its full sequence is Putative mediator of RNA polymerase II transcription subunit 30 (255 aa).

Over residues Q58 to P107 the composition is skewed to low complexity. Disordered regions lie at residues Q58–L133 and N177–Q207. The span at L108–L133 shows a compositional bias: polar residues. Residues N177–N189 are compositionally biased toward basic and acidic residues. The segment covering N190–T201 has biased composition (low complexity).

This sequence belongs to the Mediator complex subunit 30 family. Highly divergent. As to quaternary structure, component of the Mediator complex.

The protein localises to the nucleus. Its function is as follows. Component of the Mediator complex, a coactivator involved in the regulated transcription of nearly all RNA polymerase II-dependent genes. Mediator functions as a bridge to convey information from gene-specific regulatory proteins to the basal RNA polymerase II transcription machinery. Mediator is recruited to promoters by direct interactions with regulatory proteins and serves as a scaffold for the assembly of a functional preinitiation complex with RNA polymerase II and the general transcription factors. The sequence is that of Putative mediator of RNA polymerase II transcription subunit 30 (med30) from Dictyostelium discoideum (Social amoeba).